The primary structure comprises 700 residues: Pentatricopeptide repeat-containing protein 1, mitochondrial (700 aa).

Positions 49–93 (SSSQLPLGQERQENTGSLGSDPSHSNSTATQEEDEEEEESFGTLS) are disordered. The segment covering 62-78 (NTGSLGSDPSHSNSTAT) has biased composition (polar residues). A compositionally biased stretch (acidic residues) spans 79-88 (QEEDEEEEES). PPR repeat units lie at residues 135–171 (TPYW…RLQP), 172–206 (MESN…DLEP), 207–245 (SDAT…NFEL), 246–280 (NLKT…GHVV), 281–317 (TEET…GLQP), and 318–354 (SRDS…ATVL). The disordered stretch occupies residues 393–414 (SQALGPPEPPEARVPGKAQPEV). PPR repeat units lie at residues 519 to 553 (DLTF…GLVP), 554 to 585 (NLQT…QVTP), and 586 to 620 (NTHI…RVPV). The segment at 672 to 700 (HPWQKFRTKPQGDQDTGKEADDGCALGGR) is disordered. Over residues 681 to 692 (PQGDQDTGKEAD) the composition is skewed to basic and acidic residues.

It belongs to the PTCD1 family. Associates with mitochondrial leucine tRNAs. Interacts with ELAC2. As to expression, abundant in testes, skeletal muscle and heart.

It is found in the mitochondrion. Its subcellular location is the mitochondrion matrix. In terms of biological role, mitochondrial protein implicated in negative regulation of leucine tRNA levels, as well as negative regulation of mitochondria-encoded proteins and COX activity. Also affects the 3'-processing of mitochondrial tRNAs. This is Pentatricopeptide repeat-containing protein 1, mitochondrial (PTCD1) from Homo sapiens (Human).